Reading from the N-terminus, the 624-residue chain is DNA mismatch repair protein MutL (624 aa).

Positions 336–357 (GEGFHETSDSFSSRSSQHSDAR) are disordered. Residues 344-353 (DSFSSRSSQH) show a composition bias toward low complexity.

The protein belongs to the DNA mismatch repair MutL/HexB family.

This protein is involved in the repair of mismatches in DNA. It is required for dam-dependent methyl-directed DNA mismatch repair. May act as a 'molecular matchmaker', a protein that promotes the formation of a stable complex between two or more DNA-binding proteins in an ATP-dependent manner without itself being part of a final effector complex. The polypeptide is DNA mismatch repair protein MutL (Chlorobium phaeobacteroides (strain BS1)).